Consider the following 672-residue polypeptide: Penicillin-binding protein activator LpoA (672 aa).

The signal sequence occupies residues 1 to 26 (MLPFHLVRTQAGRVIPVLLAALFLAG). A lipid anchor (N-palmitoyl cysteine) is attached at C27. Residue C27 is the site of S-diacylglycerol cysteine attachment. The disordered stretch occupies residues 298–336 (APPTDTAQAGQVTPSSDGQNAQSPAPYSDQAVASTTPAP). The segment covering 305–322 (QAGQVTPSSDGQNAQSPA) has biased composition (polar residues). Over residues 327–336 (QAVASTTPAP) the composition is skewed to low complexity.

Belongs to the LpoA family. As to quaternary structure, interacts with PBP1a.

It is found in the cell outer membrane. In terms of biological role, regulator of peptidoglycan synthesis that is essential for the function of penicillin-binding protein 1A (PBP1a). This is Penicillin-binding protein activator LpoA from Pectobacterium parmentieri (strain WPP163) (Pectobacterium wasabiae (strain WPP163)).